Consider the following 107-residue polypeptide: Cysteine proteinase inhibitor (107 aa).

Residues 18 to 107 form the Cystatin domain; sequence GGVQDAPAGR…KQLQEFKPAA (90 aa). The Secondary area of contact signature appears at 63-67; sequence QVVAG.

This sequence belongs to the cystatin family. Phytocystatin subfamily. Expressed in embryos, developing endosperms, leaves, roots, flowers and pollen grains.

In terms of biological role, inhibits papain, ficin, cathepsin B and, to a lesser extent, chymopapain, but is inactive against bromelain. Inhibits the growth of pathogenic fungi. Regulated by the DOF transcription factors SAD (activator) and BPBF (repressor). The polypeptide is Cysteine proteinase inhibitor (ICY) (Hordeum vulgare (Barley)).